Here is a 384-residue protein sequence, read N- to C-terminus: Cysteine protease ATG4B (384 aa).

Residue Cys-74 is the Nucleophile of the active site. Catalysis depends on residues Asp-269 and His-271. Positions Phe-379–Leu-382 match the LIR motif.

It belongs to the peptidase C54 family.

Its subcellular location is the cytoplasm. The protein localises to the cytosol. It localises to the cytoplasmic vesicle. It is found in the autophagosome. The protein resides in the endoplasmic reticulum. Its subcellular location is the mitochondrion. The enzyme catalyses [protein]-C-terminal L-amino acid-glycyl-phosphatidylethanolamide + H2O = [protein]-C-terminal L-amino acid-glycine + a 1,2-diacyl-sn-glycero-3-phosphoethanolamine. It carries out the reaction [protein]-C-terminal L-amino acid-glycyl-phosphatidylserine + H2O = [protein]-C-terminal L-amino acid-glycine + a 1,2-diacyl-sn-glycero-3-phospho-L-serine. In terms of biological role, cysteine protease that plays a key role in autophagy by mediating both proteolytic activation and delipidation of ATG8 family proteins. Required for canonical autophagy (macroautophagy), non-canonical autophagy as well as for mitophagy. The protease activity is required for proteolytic activation of ATG8 family proteins: cleaves the C-terminal amino acid of ATG8 proteins to reveal a C-terminal glycine. Exposure of the glycine at the C-terminus is essential for ATG8 proteins conjugation to phosphatidylethanolamine (PE) and insertion to membranes, which is necessary for autophagy. Protease activity is also required to counteract formation of high-molecular weight conjugates of ATG8 proteins (ATG8ylation): acts as a deubiquitinating-like enzyme that removes ATG8 conjugated to other proteins, such as ATG3. In addition to the protease activity, also mediates delipidation of ATG8 family proteins. Catalyzes delipidation of PE-conjugated forms of ATG8 proteins during macroautophagy. Also involved in non-canonical autophagy, a parallel pathway involving conjugation of ATG8 proteins to single membranes at endolysosomal compartments, by catalyzing delipidation of ATG8 proteins conjugated to phosphatidylserine (PS). This is Cysteine protease ATG4B from Xenopus laevis (African clawed frog).